Here is a 597-residue protein sequence, read N- to C-terminus: Bromodomain-containing protein 9 (597 aa).

Over residues 1-10 (MGKKHKKHKA) the composition is skewed to basic residues. Disordered stretches follow at residues 1 to 25 (MGKK…KPLE) and 38 to 138 (EVTE…ENES). Composition is skewed to basic and acidic residues over residues 11 to 25 (EWRS…KPLE) and 50 to 62 (SYYD…ERER). Ser56 carries the post-translational modification Phosphoserine. Residues 63 to 73 (HKEKKKKKKKK) are compositionally biased toward basic residues. The segment covering 74–85 (SEKEKHLDDEER) has biased composition (basic and acidic residues). The segment covering 86 to 97 (RKRKEEKKRKRE) has biased composition (basic residues). Residues 111 to 126 (DPGKKVEVEPPPDRPV) are compositionally biased toward basic and acidic residues. A Bromo domain is found at 136-240 (NESTPIQQLL…HAGFKMMSKQ (105 aa)). The interval 214 to 216 (TYN) is histone H4K5ac H4K8ac and histone H4K5bu H4K8bu binding. Lys373 is modified (N6-acetyllysine; alternate). Lys373 is covalently cross-linked (Glycyl lysine isopeptide (Lys-Gly) (interchain with G-Cter in SUMO2); alternate). The tract at residues 536–597 (EAQAERGGSR…SPEPAASAKT (62 aa)) is disordered. Positions 544–556 (SRPSSNLSSLSNA) are enriched in low complexity. Ser566 and Ser588 each carry phosphoserine.

In terms of assembly, binds acetylated histones H3 and H4. Binds butyrylated histone H4. Component of the multiprotein chromatin-remodeling subcomplex SWI/SNF called GBAF, which includes at least BICRA or BICRAL (mutually exclusive), BRD9, SS18, the core BAF subunits, SMARCA2/BRM, SMARCA4/BRG1/BAF190A, ACTL6A/BAF53, SMARCC1/BAF155, and SMARCD1/BAF60A. Interacts (via N-terminal bromodomain) with acetylated RAD54. Interacts (via C-terminus) with RAD51.

Its subcellular location is the nucleus. Functionally, plays a role in chromatin remodeling and regulation of transcription. Acts as a chromatin reader that recognizes and binds acylated histones: binds histones that are acetylated and/or butyrylated. Component of SWI/SNF chromatin remodeling subcomplex GBAF that carries out key enzymatic activities, changing chromatin structure by altering DNA-histone contacts within a nucleosome in an ATP-dependent manner. Also orchestrates the RAD51-RAD54 complex formation and thereby plays a role in homologous recombination (HR). The protein is Bromodomain-containing protein 9 (BRD9) of Homo sapiens (Human).